The sequence spans 374 residues: Putative phosphoserine aminotransferase (374 aa).

An L-glutamate-binding site is contributed by Arg48. Pyridoxal 5'-phosphate is bound by residues 82–83 (AT), Phe106, Thr152, Asp174, and Gln197. Position 198 is an N6-(pyridoxal phosphate)lysine (Lys198). 249–250 (NT) is a binding site for pyridoxal 5'-phosphate.

It belongs to the class-V pyridoxal-phosphate-dependent aminotransferase family. SerC subfamily. Homodimer. The cofactor is pyridoxal 5'-phosphate.

It localises to the cytoplasm. The enzyme catalyses O-phospho-L-serine + 2-oxoglutarate = 3-phosphooxypyruvate + L-glutamate. The catalysed reaction is 4-(phosphooxy)-L-threonine + 2-oxoglutarate = (R)-3-hydroxy-2-oxo-4-phosphooxybutanoate + L-glutamate. Its pathway is amino-acid biosynthesis; L-serine biosynthesis; L-serine from 3-phospho-D-glycerate: step 2/3. It functions in the pathway cofactor biosynthesis; pyridoxine 5'-phosphate biosynthesis; pyridoxine 5'-phosphate from D-erythrose 4-phosphate: step 3/5. Catalyzes the reversible conversion of 3-phosphohydroxypyruvate to phosphoserine and of 3-hydroxy-2-oxo-4-phosphonooxybutanoate to phosphohydroxythreonine. The polypeptide is Putative phosphoserine aminotransferase (Mycolicibacterium paratuberculosis (strain ATCC BAA-968 / K-10) (Mycobacterium paratuberculosis)).